A 354-amino-acid polypeptide reads, in one-letter code: mRNA cap guanine-N(7) methyltransferase 2 (354 aa).

The mRNA cap 0 methyltransferase domain occupies 8-286 (KPEQSHHRLF…LYATFIFQKP (279 aa)). S-adenosyl-L-methionine contacts are provided by residues Lys-21, Asp-61, and 88-89 (DP).

It belongs to the class I-like SAM-binding methyltransferase superfamily. mRNA cap 0 methyltransferase family.

It is found in the nucleus. The enzyme catalyses a 5'-end (5'-triphosphoguanosine)-ribonucleoside in mRNA + S-adenosyl-L-methionine = a 5'-end (N(7)-methyl 5'-triphosphoguanosine)-ribonucleoside in mRNA + S-adenosyl-L-homocysteine. Its function is as follows. mRNA capping methyltransferase that methylates the N7 position of the added guanosine to the 5'-cap structure of mRNAs. Binds RNA containing 5'-terminal GpppC. This chain is mRNA cap guanine-N(7) methyltransferase 2, found in Arabidopsis thaliana (Mouse-ear cress).